Consider the following 179-residue polypeptide: MSRIGKVPIPIPDKVNVTIKGQAVTVKGPKGELSREITPEVAIEQADNLVTVTRRNESRIARQRHGLSRTLIANMVEGVSKGFEKKLQIQGVGYRAQVQGRNLILNVGYSNPVTIEPPEGVQVAVESNTNVIVSGINKEVVGNTAARIRAVRPPEPYKGKGIRYADEYVRRKVGKAGKK.

This sequence belongs to the universal ribosomal protein uL6 family. Part of the 50S ribosomal subunit.

Its function is as follows. This protein binds to the 23S rRNA, and is important in its secondary structure. It is located near the subunit interface in the base of the L7/L12 stalk, and near the tRNA binding site of the peptidyltransferase center. In Acaryochloris marina (strain MBIC 11017), this protein is Large ribosomal subunit protein uL6.